A 729-amino-acid polypeptide reads, in one-letter code: Phosphoribosylformylglycinamidine synthase subunit PurL (729 aa).

The active site involves H42. ATP-binding residues include Y45 and K84. Mg(2+) is bound at residue E86. Residues 87 to 90 (SHNH) and R109 each bind substrate. Catalysis depends on H88, which acts as the Proton acceptor. D110 contributes to the Mg(2+) binding site. A substrate-binding site is contributed by Q238. D266 provides a ligand contact to Mg(2+). 310–312 (ESQ) contacts substrate. Residues D492 and G529 each contribute to the ATP site. N530 lines the Mg(2+) pocket. A substrate-binding site is contributed by S532.

It belongs to the FGAMS family. As to quaternary structure, monomer. Part of the FGAM synthase complex composed of 1 PurL, 1 PurQ and 2 PurS subunits.

It localises to the cytoplasm. The catalysed reaction is N(2)-formyl-N(1)-(5-phospho-beta-D-ribosyl)glycinamide + L-glutamine + ATP + H2O = 2-formamido-N(1)-(5-O-phospho-beta-D-ribosyl)acetamidine + L-glutamate + ADP + phosphate + H(+). Its pathway is purine metabolism; IMP biosynthesis via de novo pathway; 5-amino-1-(5-phospho-D-ribosyl)imidazole from N(2)-formyl-N(1)-(5-phospho-D-ribosyl)glycinamide: step 1/2. Part of the phosphoribosylformylglycinamidine synthase complex involved in the purines biosynthetic pathway. Catalyzes the ATP-dependent conversion of formylglycinamide ribonucleotide (FGAR) and glutamine to yield formylglycinamidine ribonucleotide (FGAM) and glutamate. The FGAM synthase complex is composed of three subunits. PurQ produces an ammonia molecule by converting glutamine to glutamate. PurL transfers the ammonia molecule to FGAR to form FGAM in an ATP-dependent manner. PurS interacts with PurQ and PurL and is thought to assist in the transfer of the ammonia molecule from PurQ to PurL. This is Phosphoribosylformylglycinamidine synthase subunit PurL from Campylobacter concisus (strain 13826).